Reading from the N-terminus, the 189-residue chain is Protein GrpE (189 aa).

Residues M1–L13 show a composition bias toward polar residues. The tract at residues M1 to N35 is disordered.

Belongs to the GrpE family. As to quaternary structure, homodimer.

It localises to the cytoplasm. In terms of biological role, participates actively in the response to hyperosmotic and heat shock by preventing the aggregation of stress-denatured proteins, in association with DnaK and GrpE. It is the nucleotide exchange factor for DnaK and may function as a thermosensor. Unfolded proteins bind initially to DnaJ; upon interaction with the DnaJ-bound protein, DnaK hydrolyzes its bound ATP, resulting in the formation of a stable complex. GrpE releases ADP from DnaK; ATP binding to DnaK triggers the release of the substrate protein, thus completing the reaction cycle. Several rounds of ATP-dependent interactions between DnaJ, DnaK and GrpE are required for fully efficient folding. This Polaromonas naphthalenivorans (strain CJ2) protein is Protein GrpE.